The following is a 456-amino-acid chain: tRNA modification GTPase MnmE (456 aa).

(6S)-5-formyl-5,6,7,8-tetrahydrofolate-binding residues include Arg24, Glu81, and Lys120. Residues 216–379 (GMKVVIAGRP…LREHLKECIG (164 aa)) enclose the TrmE-type G domain. Asn226 contributes to the K(+) binding site. Residues 226–231 (NAGKSS), 245–251 (TAIEGTT), and 270–273 (DTAG) contribute to the GTP site. Ser230 serves as a coordination point for Mg(2+). Positions 245, 247, and 250 each coordinate K(+). Thr251 lines the Mg(2+) pocket. (6S)-5-formyl-5,6,7,8-tetrahydrofolate is bound at residue Lys456.

This sequence belongs to the TRAFAC class TrmE-Era-EngA-EngB-Septin-like GTPase superfamily. TrmE GTPase family. In terms of assembly, homodimer. Heterotetramer of two MnmE and two MnmG subunits. Requires K(+) as cofactor.

Its subcellular location is the cytoplasm. In terms of biological role, exhibits a very high intrinsic GTPase hydrolysis rate. Involved in the addition of a carboxymethylaminomethyl (cmnm) group at the wobble position (U34) of certain tRNAs, forming tRNA-cmnm(5)s(2)U34. The chain is tRNA modification GTPase MnmE from Marinobacter nauticus (strain ATCC 700491 / DSM 11845 / VT8) (Marinobacter aquaeolei).